A 406-amino-acid polypeptide reads, in one-letter code: MSVLEVLKERGYIAQMTHEEEIEKLLEKEKITFYIGFDPTADSLHVGHLIQIMTMAHMQRAGHRPIVLLGGGTALIGDPSGRTDMRKMLTKEEIDRNAEAFKKQMERFIDFSEGKAIMENNAKWLLGLNYIEFLRDIGVHFTVNRMLEAEAFKTRMERGLTFLEFNYMLMQAYDFLELYRRYGCVMQMGGNDQWSNIIAGVELIRKKEGKQAYGMTFVLLTTSEGKKMGKTEKGAIWLDPKKTSPYEFYQYWRNIGDADVEKALALLTFLPMDEVRRLGRLRDKEINEAKKVLAFEVTKLVHGEEEALKAQKAAEALFEGGGEMEHVPSIEVSQDIIGRKIVDVLFEAKVIPSKSEGRRLIQQGGLYINDKRVENVDECIKEEMVKENAILVRKGKKEYHRLLVKE.

Tyr-34 serves as a coordination point for L-tyrosine. Positions 39–48 (PTADSLHVGH) match the 'HIGH' region motif. Tyr-167 and Gln-171 together coordinate L-tyrosine. Positions 227–231 (KMGKT) match the 'KMSKS' region motif. Residue Lys-230 participates in ATP binding. One can recognise an S4 RNA-binding domain in the interval 339 to 404 (RKIVDVLFEA…GKKEYHRLLV (66 aa)).

The protein belongs to the class-I aminoacyl-tRNA synthetase family. TyrS type 1 subfamily. As to quaternary structure, homodimer.

Its subcellular location is the cytoplasm. The enzyme catalyses tRNA(Tyr) + L-tyrosine + ATP = L-tyrosyl-tRNA(Tyr) + AMP + diphosphate + H(+). In terms of biological role, catalyzes the attachment of tyrosine to tRNA(Tyr) in a two-step reaction: tyrosine is first activated by ATP to form Tyr-AMP and then transferred to the acceptor end of tRNA(Tyr). This chain is Tyrosine--tRNA ligase, found in Caldanaerobacter subterraneus subsp. tengcongensis (strain DSM 15242 / JCM 11007 / NBRC 100824 / MB4) (Thermoanaerobacter tengcongensis).